We begin with the raw amino-acid sequence, 118 residues long: Ribonuclease P protein component (118 aa).

The protein belongs to the RnpA family. In terms of assembly, consists of a catalytic RNA component (M1 or rnpB) and a protein subunit.

The catalysed reaction is Endonucleolytic cleavage of RNA, removing 5'-extranucleotides from tRNA precursor.. Functionally, RNaseP catalyzes the removal of the 5'-leader sequence from pre-tRNA to produce the mature 5'-terminus. It can also cleave other RNA substrates such as 4.5S RNA. The protein component plays an auxiliary but essential role in vivo by binding to the 5'-leader sequence and broadening the substrate specificity of the ribozyme. In Shewanella baltica (strain OS155 / ATCC BAA-1091), this protein is Ribonuclease P protein component.